The chain runs to 283 residues: Bifunctional protein FolD (283 aa).

Residues 165–167 (GAS) and Ser-190 each bind NADP(+).

The protein belongs to the tetrahydrofolate dehydrogenase/cyclohydrolase family. In terms of assembly, homodimer.

It catalyses the reaction (6R)-5,10-methylene-5,6,7,8-tetrahydrofolate + NADP(+) = (6R)-5,10-methenyltetrahydrofolate + NADPH. The catalysed reaction is (6R)-5,10-methenyltetrahydrofolate + H2O = (6R)-10-formyltetrahydrofolate + H(+). It functions in the pathway one-carbon metabolism; tetrahydrofolate interconversion. Its function is as follows. Catalyzes the oxidation of 5,10-methylenetetrahydrofolate to 5,10-methenyltetrahydrofolate and then the hydrolysis of 5,10-methenyltetrahydrofolate to 10-formyltetrahydrofolate. This chain is Bifunctional protein FolD, found in Cupriavidus necator (strain ATCC 17699 / DSM 428 / KCTC 22496 / NCIMB 10442 / H16 / Stanier 337) (Ralstonia eutropha).